Here is a 36-residue protein sequence, read N- to C-terminus: Photosystem II reaction center protein X (36 aa).

Residues 9-29 (LWSIFWGGVVVALGAAALTAI) form a helical membrane-spanning segment.

This sequence belongs to the PsbX family. Type 1 subfamily. In terms of assembly, PSII is composed of 1 copy each of membrane proteins PsbA, PsbB, PsbC, PsbD, PsbE, PsbF, PsbH, PsbI, PsbJ, PsbK, PsbL, PsbM, PsbT, PsbX, Psb30/Ycf12, peripheral proteins PsbO, CyanoQ (PsbQ), PsbU, PsbV and a large number of cofactors. It forms dimeric complexes.

Its subcellular location is the cell inner membrane. Functionally, involved in the binding and/or turnover of quinones at the Q(B) site of photosystem II (PSII). PSII is a light-driven water plastoquinone oxidoreductase, using light energy to abstract electrons from H(2)O, generating a proton gradient subsequently used for ATP formation. The chain is Photosystem II reaction center protein X from Gloeobacter violaceus (strain ATCC 29082 / PCC 7421).